The chain runs to 371 residues: Maltose/maltodextrin import ATP-binding protein MalK (371 aa).

The 231-residue stretch at valine 4–isoleucine 234 folds into the ABC transporter domain. Residue glycine 36–serine 43 coordinates ATP.

This sequence belongs to the ABC transporter superfamily. Maltooligosaccharide importer (TC 3.A.1.1.1) family. In terms of assembly, the complex is composed of two ATP-binding proteins (MalK), two transmembrane proteins (MalG and MalK) and a solute-binding protein (MalE).

The protein localises to the cell inner membrane. It carries out the reaction D-maltose(out) + ATP + H2O = D-maltose(in) + ADP + phosphate + H(+). Functionally, part of the ABC transporter complex MalEFGK involved in maltose/maltodextrin import. Responsible for energy coupling to the transport system. This chain is Maltose/maltodextrin import ATP-binding protein MalK, found in Escherichia coli O157:H7.